The following is a 110-amino-acid chain: Hydrogenase maturation factor HypA (110 aa).

Residue His-2 participates in Ni(2+) binding. Zn(2+)-binding residues include Cys-73, Cys-76, Cys-87, and Cys-89.

It belongs to the HypA/HybF family.

Involved in the maturation of [NiFe] hydrogenases. Required for nickel insertion into the metal center of the hydrogenase. This is Hydrogenase maturation factor HypA from Archaeoglobus fulgidus (strain ATCC 49558 / DSM 4304 / JCM 9628 / NBRC 100126 / VC-16).